A 322-amino-acid polypeptide reads, in one-letter code: Large ribosomal subunit protein uL15m (322 aa).

The N-terminal 57 residues, methionine 1–tyrosine 57, are a transit peptide targeting the mitochondrion. Residues glycine 69–arginine 99 are disordered. The span at proline 81 to glutamine 93 shows a compositional bias: gly residues.

The protein belongs to the universal ribosomal protein uL15 family. In terms of assembly, component of the mitochondrial large ribosomal subunit (mt-LSU). Mature yeast 74S mitochondrial ribosomes consist of a small (37S) and a large (54S) subunit. The 37S small subunit contains a 15S ribosomal RNA (15S mt-rRNA) and 34 different proteins. The 54S large subunit contains a 21S rRNA (21S mt-rRNA) and 46 different proteins.

It is found in the mitochondrion. Its function is as follows. Component of the mitochondrial ribosome (mitoribosome), a dedicated translation machinery responsible for the synthesis of mitochondrial genome-encoded proteins, including at least some of the essential transmembrane subunits of the mitochondrial respiratory chain. The mitoribosomes are attached to the mitochondrial inner membrane and translation products are cotranslationally integrated into the membrane. In Saccharomyces cerevisiae (strain ATCC 204508 / S288c) (Baker's yeast), this protein is Large ribosomal subunit protein uL15m (MRPL10).